Here is a 229-residue protein sequence, read N- to C-terminus: Glutathione S-transferase 1 (229 aa).

Residues 2–86 (AQFTLWSHAH…YLADKYDTER (85 aa)) enclose the GST N-terminal domain. The GST C-terminal domain maps to 93–229 (DHPEYYKVIQ…FEERSKALDN (137 aa)).

The protein belongs to the GST superfamily.

It catalyses the reaction RX + glutathione = an S-substituted glutathione + a halide anion + H(+). Its function is as follows. Involved in the oxidative stress response and detoxification. In Schizosaccharomyces pombe (strain 972 / ATCC 24843) (Fission yeast), this protein is Glutathione S-transferase 1 (gst1).